The following is a 732-amino-acid chain: 1,4-alpha-glucan branching enzyme GlgB 2 (732 aa).

The Nucleophile role is filled by Asp-413. Glu-466 (proton donor) is an active-site residue.

This sequence belongs to the glycosyl hydrolase 13 family. GlgB subfamily. As to quaternary structure, monomer.

The enzyme catalyses Transfers a segment of a (1-&gt;4)-alpha-D-glucan chain to a primary hydroxy group in a similar glucan chain.. The protein operates within glycan biosynthesis; glycogen biosynthesis. Its function is as follows. Catalyzes the formation of the alpha-1,6-glucosidic linkages in glycogen by scission of a 1,4-alpha-linked oligosaccharide from growing alpha-1,4-glucan chains and the subsequent attachment of the oligosaccharide to the alpha-1,6 position. This chain is 1,4-alpha-glucan branching enzyme GlgB 2, found in Rhizobium etli (strain ATCC 51251 / DSM 11541 / JCM 21823 / NBRC 15573 / CFN 42).